The following is a 163-amino-acid chain: Phosphopantetheine adenylyltransferase (163 aa).

Thr10 lines the substrate pocket. Residues 10–11 and His18 each bind ATP; that span reads TF. Residues Lys42, Leu75, and Arg89 each coordinate substrate. ATP-binding positions include 90 to 92, Glu100, and 125 to 131; these read GVR and YTYVASS.

This sequence belongs to the bacterial CoaD family. As to quaternary structure, homohexamer. Requires Mg(2+) as cofactor.

The protein localises to the cytoplasm. It carries out the reaction (R)-4'-phosphopantetheine + ATP + H(+) = 3'-dephospho-CoA + diphosphate. Its pathway is cofactor biosynthesis; coenzyme A biosynthesis; CoA from (R)-pantothenate: step 4/5. Its function is as follows. Reversibly transfers an adenylyl group from ATP to 4'-phosphopantetheine, yielding dephospho-CoA (dPCoA) and pyrophosphate. This Pelodictyon phaeoclathratiforme (strain DSM 5477 / BU-1) protein is Phosphopantetheine adenylyltransferase.